The following is a 96-amino-acid chain: MNIRPLHDRVVVRRMEEERLSAGGIVIPDSATEKPIQGEIIAVGHGKILDNGSVRALDVKVGDSVLFGKYSGTEVKLDGKEFLVMREEDIMAVVEG.

This sequence belongs to the GroES chaperonin family. As to quaternary structure, heptamer of 7 subunits arranged in a ring. Interacts with the chaperonin GroEL.

It localises to the cytoplasm. Its function is as follows. Together with the chaperonin GroEL, plays an essential role in assisting protein folding. The GroEL-GroES system forms a nano-cage that allows encapsulation of the non-native substrate proteins and provides a physical environment optimized to promote and accelerate protein folding. GroES binds to the apical surface of the GroEL ring, thereby capping the opening of the GroEL channel. In Allochromatium vinosum (Chromatium vinosum), this protein is Co-chaperonin GroES.